The following is a 472-amino-acid chain: MNKTTSSHSPIHVIGGGLAGSEAAWQIAEAGVPVILHEMRGVRGTDAHKTESLAELVCSNSFRSDDATSNAVGVLHAEMRLAGSLIMRCADLNQVPAGGALAVDREGFAEAVSAAIADHPLITVLREEIRGLPPKDWDLAIIATGPLTAPDLAEAIRAETGADALAFFDAIAPIVHADTIDMDICWHQSRYDKVGPGGTGKDYINCPLTQEQYDAFVDALIAGDKAGFKEWEGTPYFDGCLPIEVMAERGRETLRHGPMKPMGLTNAHNPSVKPYAVVQLRQDNALGTLYNMVGFQTKLKYGAQGEVFRMIPGLQNAEFARLGGLHRNTYINSPTLLDHSLTLKSRPGLRFAGQITGCEGYVESASIGLLAGRFAAAERKGVSPVLPPVTTAFGALLDHITGGHIVSDDEPGKRSFQPMNINFGLFPPLEPGALTRPEGAKRFRGKEKALAKKQAMASRALSDCASWLDQAV.

FAD is bound at residue Gly-15 to Gly-20.

The protein belongs to the MnmG family. TrmFO subfamily. Requires FAD as cofactor.

It is found in the cytoplasm. The enzyme catalyses uridine(54) in tRNA + (6R)-5,10-methylene-5,6,7,8-tetrahydrofolate + NADH + H(+) = 5-methyluridine(54) in tRNA + (6S)-5,6,7,8-tetrahydrofolate + NAD(+). It carries out the reaction uridine(54) in tRNA + (6R)-5,10-methylene-5,6,7,8-tetrahydrofolate + NADPH + H(+) = 5-methyluridine(54) in tRNA + (6S)-5,6,7,8-tetrahydrofolate + NADP(+). Functionally, catalyzes the folate-dependent formation of 5-methyl-uridine at position 54 (M-5-U54) in all tRNAs. This chain is Methylenetetrahydrofolate--tRNA-(uracil-5-)-methyltransferase TrmFO, found in Rhizobium meliloti (strain 1021) (Ensifer meliloti).